Consider the following 405-residue polypeptide: Intraflagellar transport protein 57 homolog (405 aa).

A coiled-coil region spans residues 252–380 (ETLKTNILEN…AQLNLEVALL (129 aa)).

It belongs to the IFT57 family.

Its subcellular location is the cytoplasm. The protein resides in the cytoskeleton. The protein localises to the cilium basal body. Required for the formation of cilia. This is Intraflagellar transport protein 57 homolog from Drosophila melanogaster (Fruit fly).